The chain runs to 1509 residues: ABC transporter G family member 5 (1509 aa).

Basic and acidic residues predominate over residues 1–10 (MVKQDPRDKS). Residues 1–70 (MVKQDPRDKS…NNNNNNIKHK (70 aa)) are disordered. Over residues 11-28 (SYSPNLSIPINNQEEPTL) the composition is skewed to polar residues. A compositionally biased stretch (low complexity) spans 29–66 (NNNNNNNNNNNNNNNNNNNNNNNNNNNNNNNKNNNNNN). The ABC transporter 1 domain maps to 129–376 (VYCRNATYTV…FKKLGFACPS (248 aa)). 168–175 (GTPGCGKS) provides a ligand contact to ATP. The ABC transmembrane type-2 1 domain maps to 472-748 (SRNYYNFATR…SVCFFALKYL (277 aa)). Transmembrane regions (helical) follow at residues 477 to 497 (NFAT…TLYW), 512 to 532 (LLFF…NSFF), 557 to 577 (IICD…IVYW), 583 to 603 (PVFI…NLSL), 616 to 636 (IEIA…FSGF), 643 to 663 (IGGW…FQGL), and 725 to 745 (IVYA…FFAL). Residues 813-831 (PLTSPNYNNNNNLSGSGNN) show a composition bias toward low complexity. The segment at 813–881 (PLTSPNYNNN…PISTSQKDIS (69 aa)) is disordered. The segment covering 839–881 (TPSTLSPMVNSPLTNLSPMVNTPSKNGNHSKQKPISTSQKDIS) has biased composition (polar residues). An ABC transporter 2 domain is found at 888–1141 (LQFKKLCYAV…VILDYCDKLG (254 aa)). Position 935–942 (935–942 (GPSGAGKS)) interacts with ATP. The region spanning 1231–1504 (LRRPAIFVSN…GLSFWGFKKV (274 aa)) is the ABC transmembrane type-2 2 domain. Transmembrane regions (helical) follow at residues 1236 to 1256 (IFVS…TLFV), 1271 to 1291 (LLFF…PTTV), 1320 to 1340 (YPFI…IAGL), 1352 to 1372 (CLFI…CLAV), 1379 to 1399 (MAST…GFVI), and 1481 to 1501 (IDIA…FWGF).

Belongs to the ABC transporter superfamily. ABCG family. PDR (TC 3.A.1.205) subfamily.

It is found in the membrane. The protein is ABC transporter G family member 5 (abcG5) of Dictyostelium discoideum (Social amoeba).